The following is a 428-amino-acid chain: Histone deacetylase 3 (428 aa).

The segment at 3–316 (KTVAYFYDPD…WTYETSLLVE (314 aa)) is histone deacetylase. 3 residues coordinate 1D-myo-inositol 1,4,5,6-tetrakisphosphate: His17, Gly21, and Lys25. The active site involves His135. Zn(2+) contacts are provided by Asp170, His172, and Asp259. Arg265 contacts 1D-myo-inositol 1,4,5,6-tetrakisphosphate. Composition is skewed to basic and acidic residues over residues 388 to 405 (DRTD…ENYS) and 415 to 428 (DGDH…DVEI). The segment at 388–428 (DRTDEADAEERGPEENYSRPEAPNEFYDGDHDNDKESDVEI) is disordered. The residue at position 424 (Ser424) is a Phosphoserine.

Belongs to the histone deacetylase family. HD type 1 subfamily. In terms of assembly, interacts with HDAC7 and HDAC9. Interacts with DAXX, KDM4A, HDAC10 and DACH1. Found in a complex with NCOR1 and NCOR2. Component of the N-Cor repressor complex, at least composed of NCOR1, NCOR2, HDAC3, TBL1X, TBL1R, CORO2A and GPS2. Interacts with BCOR, MJD2A/JHDM3A, NRIP1, PRDM6 and SRY. Interacts with BTBD14B. Interacts with GLIS2. Interacts (via the DNA-binding domain) with NR2C1; the interaction recruits phosphorylated NR2C1 to PML bodies for sumoylation. Component of the Notch corepressor complex. Interacts with CBFA2T3 and NKAP. Interacts with APEX1; the interaction is not dependent on the acetylated status of APEX1. Interacts with ZMYND15. Interacts with SMRT/NCOR2 and BCL6 on DNA enhancer elements. Interacts with INSM1. Interacts with XBP1 isoform 1; the interaction occurs in endothelial cell (EC) under disturbed flow. Interacts (via C-terminus) with CCAR2 (via N-terminus). Interacts with and deacetylates MEF2D. Interacts with BEND3. Interacts with NKAPL. Interacts with DHX36; this interaction occurs in a RNA-dependent manner. Interacts weakly with CRY1; this interaction is enhanced in the presence of FBXL3. Interacts with FBXL3 and BMAL1. Interacts with NCOR1. Interacts with RARA. Interacts with SETD5. (Microbial infection) Interacts with human cytomegalovirus (HHV-5) immediate early protein IE1; this interaction decreases histone acetylation and allows transcriptional activation by the virus. The cofactor is Zn(2+). Post-translationally, sumoylated in vitro. In terms of processing, deubiquitinated on 'Lys-63'-linked ubiquitin chains by USP38; leading to a decreased level of histone acetylation. As to expression, widely expressed.

The protein resides in the nucleus. Its subcellular location is the chromosome. The protein localises to the cytoplasm. It is found in the cytosol. The catalysed reaction is N(6)-acetyl-L-lysyl-[histone] + H2O = L-lysyl-[histone] + acetate. The enzyme catalyses N(6)-acetyl-L-lysyl-[protein] + H2O = L-lysyl-[protein] + acetate. It catalyses the reaction N(6)-(2E)-butenoyl-L-lysyl-[protein] + H2O = (2E)-2-butenoate + L-lysyl-[protein]. It carries out the reaction N(6)-(2-hydroxyisobutanoyl)-L-lysyl-[protein] + H2O = 2-hydroxy-2-methylpropanoate + L-lysyl-[protein]. The catalysed reaction is N(6)-[(S)-lactoyl]-L-lysyl-[protein] + H2O = (S)-lactate + L-lysyl-[protein]. Inositol tetraphosphate (1D-myo-inositol 1,4,5,6-tetrakisphosphate) promotes the histone deacetylase activity by acting as an intermolecular glue between HDAC3 and NCOR2, thereby promoting its association with the N-Cor complex, a prerequisite for the histone deacetylase activity. Its function is as follows. Histone deacetylase that catalyzes the deacetylation of lysine residues on the N-terminal part of the core histones (H2A, H2B, H3 and H4), and some other non-histone substrates. Histone deacetylation gives a tag for epigenetic repression and plays an important role in transcriptional regulation, cell cycle progression and developmental events. Histone deacetylases act via the formation of large multiprotein complexes, such as N-Cor repressor complex, which activate the histone deacetylase activity. Participates in the BCL6 transcriptional repressor activity by deacetylating the H3 'Lys-27' (H3K27) on enhancer elements, antagonizing EP300 acetyltransferase activity and repressing proximal gene expression. Acts as a molecular chaperone for shuttling phosphorylated NR2C1 to PML bodies for sumoylation. Contributes, together with XBP1 isoform 1, to the activation of NFE2L2-mediated HMOX1 transcription factor gene expression in a PI(3)K/mTORC2/Akt-dependent signaling pathway leading to endothelial cell (EC) survival under disturbed flow/oxidative stress. Regulates both the transcriptional activation and repression phases of the circadian clock in a deacetylase activity-independent manner. During the activation phase, promotes the accumulation of ubiquitinated BMAL1 at the E-boxes and during the repression phase, blocks FBXL3-mediated CRY1/2 ubiquitination and promotes the interaction of CRY1 and BMAL1. The NCOR1-HDAC3 complex regulates the circadian expression of the core clock gene BMAL1 and the genes involved in lipid metabolism in the liver. Also functions as a deacetylase for non-histone targets, such as KAT5, MEF2D, MAPK14, RARA and STAT3. Serves as a corepressor of RARA, mediating its deacetylation and repression, leading to inhibition of RARE DNA element binding. In association with RARA, plays a role in the repression of microRNA-10a and thereby in the inflammatory response. In addition to protein deacetylase activity, also acts as a protein-lysine deacylase by recognizing other acyl groups: catalyzes removal of (2E)-butenoyl (crotonyl), lactoyl (lactyl) and 2-hydroxyisobutanoyl (2-hydroxyisobutyryl) acyl groups from lysine residues, leading to protein decrotonylation, delactylation and de-2-hydroxyisobutyrylation, respectively. Catalyzes decrotonylation of MAPRE1/EB1. Mediates delactylation NBN/NBS1, thereby inhibiting DNA double-strand breaks (DSBs) via homologous recombination (HR). The protein is Histone deacetylase 3 (HDAC3) of Homo sapiens (Human).